Here is a 555-residue protein sequence, read N- to C-terminus: Spermine oxidase (555 aa).

FAD-binding positions include Ala35, Glu55, Arg63, 79–80 (TW), and Val261. Residues 271-306 (ARPRGPEIEPRGEGDHNHDTGEGGQGGEEPRGGRWD) form a disordered region. The segment covering 274 to 291 (RGPEIEPRGEGDHNHDTG) has biased composition (basic and acidic residues). Residues Glu519 and 528-529 (TT) contribute to the FAD site.

The protein belongs to the flavin monoamine oxidase family. It depends on FAD as a cofactor. As to expression, widely expressed. Expressed in human tumor cell lines. Isoform 4 is only found in an embryonal kidney cell line.

The protein resides in the cytoplasm. Its subcellular location is the nucleus. The catalysed reaction is spermine + O2 + H2O = 3-aminopropanal + spermidine + H2O2. It functions in the pathway amine and polyamine degradation; spermine degradation. Inhibited at more than 90% by SL-11144, SL-11150 and SL-11158, at concentrations less than 1 uM. Functionally, flavoenzyme which catalyzes the oxidation of spermine to spermidine. Can also use N(1)-acetylspermine and spermidine as substrates, with different affinity depending on the isoform (isozyme) and on the experimental conditions. Plays an important role in the regulation of polyamine intracellular concentration and has the potential to act as a determinant of cellular sensitivity to the antitumor polyamine analogs. May contribute to beta-alanine production via aldehyde dehydrogenase conversion of 3-amino-propanal. The sequence is that of Spermine oxidase (SMOX) from Homo sapiens (Human).